Consider the following 1130-residue polypeptide: Sterol regulatory element-binding protein 2 (1130 aa).

The transcriptional activation (acidic) stretch occupies residues 1 to 50 (MDESSELGVLETMETLTELGDELTLGDIDEMLQFVSNQVGEFPDLFSEQL). The Cytoplasmic portion of the chain corresponds to 1 to 470 (MDESSELGVL…VALGMVDRSR (470 aa)). Residues 53-133 (SFPGGGSNGG…PQPQPQPPAQ (81 aa)) form a disordered region. Residues 55–64 (PGGGSNGGSG) are compositionally biased toward gly residues. The segment covering 83-93 (RSFSQVPLSTF) has biased composition (polar residues). Residues 94 to 104 (SPSAASPQAPA) are compositionally biased toward low complexity. The span at 111-131 (PTPPRATPVLQPRPQPQPQPP) shows a compositional bias: pro residues. Positions 226-480 (QQVPVLVQPQ…ILLCVLTFLG (255 aa)) are interaction with LMNA. Residues 319-369 (ERRTTHNIIEKRYRSSINDKIIELKDLVMGTDAKMHKSGVLRKAIDYIKYL) form the bHLH domain. A leucine-zipper region spans residues 369–390 (LQQVNHKLRQENMVLKLANQKN). Lysine 453 is covalently cross-linked (Glycyl lysine isopeptide (Lys-Gly) (interchain with G-Cter in SUMO2)). Residues 471 to 491 (ILLCVLTFLGLSFNPLTSLLQ) traverse the membrane as a helical segment. At 492-522 (WGGAHNTDQHPYSGSGRSVLSLESGAGGWFD) the chain is on the lumenal side. A helical transmembrane segment spans residues 523–543 (WMVPTLLLWLVNGVIVLSVFV). Over 544 to 1130 (KLLVHGEPVI…LGGGTAIAAS (587 aa)) the chain is Cytoplasmic. A Phosphoserine modification is found at serine 1087.

The protein belongs to the SREBP family. Forms a tight complex with SCAP, the SCAP-SREBP complex, in the endoplasmic reticulum membrane and the Golgi apparatus. Interacts with PAQR3; the interaction anchors the SCAP-SREBP complex to the Golgi apparatus in low cholesterol conditions. Interacts (via C-terminal domain) with RNF139. As to quaternary structure, homodimer; efficient DNA binding of the soluble transcription factor fragment requires dimerization with another bHLH protein. Interacts with LMNA. Processed in the Golgi apparatus, releasing the protein from the membrane. At low cholesterol the SCAP-SREBP complex is recruited into COPII vesicles for export from the endoplasmic reticulum. In the Golgi, complex SREBPs are cleaved sequentially by site-1 (MBTPS1, S1P) and site-2 (MBTPS2, S2P) proteases. The first cleavage by site-1 protease occurs within the luminal loop, the second cleavage by site-2 protease occurs within the first transmembrane domain, releasing the transcription factor from the Golgi membrane. Apoptosis triggers cleavage by the cysteine proteases caspase-3 and caspase-7. Cleavage and activation is induced by mediated cholesterol efflux. In terms of processing, phosphorylated by AMPK, leading to suppress protein processing and nuclear translocation, and repress target gene expression. Post-translationally, SCAP-free SREBF2 is ubiquitinated by the BCR(ARMC5) complex, leading to its degradation. Ubiquitinated; the nuclear form has a rapid turnover and is rapidly ubiquitinated and degraded by the proteasome in the nucleus.

Its subcellular location is the endoplasmic reticulum membrane. It localises to the golgi apparatus membrane. The protein resides in the cytoplasmic vesicle. The protein localises to the COPII-coated vesicle membrane. It is found in the nucleus. Its activity is regulated as follows. Activation by cleavage is down-regulated upon activation of SIRT3-dependent PRKAA1/AMPK-alpha signaling cascade which leads to inhibition of ATP-consuming lipogenesis to restore cellular energy balance. Precursor of the transcription factor form (Processed sterol regulatory element-binding protein 2), which is embedded in the endoplasmic reticulum membrane. Low sterol concentrations promote processing of this form, releasing the transcription factor form that translocates into the nucleus and activates transcription of genes involved in cholesterol biosynthesis. In terms of biological role, key transcription factor that regulates expression of genes involved in cholesterol biosynthesis. Binds to the sterol regulatory element 1 (SRE-1) (5'-ATCACCCCAC-3'). Has dual sequence specificity binding to both an E-box motif (5'-ATCACGTGA-3') and to SRE-1 (5'-ATCACCCCAC-3'). Regulates transcription of genes related to cholesterol synthesis pathway. This is Sterol regulatory element-binding protein 2 from Mus musculus (Mouse).